A 216-amino-acid polypeptide reads, in one-letter code: Trimethylamine corrinoid protein 1 (216 aa).

Residues 1 to 92 (MANKEEIIAK…EMEKRKSQTK (92 aa)) enclose the B12-binding N-terminal domain. Residues 94-216 (LGTIVIGTIE…VVSKVKAALL (123 aa)) enclose the B12-binding domain. Position 107 (His107) interacts with methylcob(III)alamin.

This sequence belongs to the methylamine corrinoid protein family. Can form a complex with MttB.

It functions in the pathway one-carbon metabolism; methanogenesis from trimethylamine. Its function is as follows. Acts probably as a methyl group carrier between MttB and either MtbA or MtaA. This chain is Trimethylamine corrinoid protein 1 (mttC1), found in Methanosarcina mazei (strain ATCC BAA-159 / DSM 3647 / Goe1 / Go1 / JCM 11833 / OCM 88) (Methanosarcina frisia).